Here is a 988-residue protein sequence, read N- to C-terminus: Voltage-gated delayed rectifier potassium channel KCNH5 (988 aa).

Residues Met-1–Trp-217 lie on the Cytoplasmic side of the membrane. Positions Thr-14–Asp-86 constitute a PAS domain. In terms of domain architecture, PAC spans Asn-91–Thr-143. Residues Asp-218–Phe-238 traverse the membrane as a helical segment. Residues Lys-239 to Asn-243 lie on the Extracellular side of the membrane. The helical transmembrane segment at Asn-244–Leu-264 threads the bilayer. Residues Asn-265 to Thr-291 are Cytoplasmic-facing. Residues Trp-292–Val-312 form a helical membrane-spanning segment. The Extracellular segment spans residues Asp-313–Leu-319. A helical; Voltage-sensor membrane pass occupies residues Phe-320 to His-340. Over Tyr-341–Ala-346 the chain is Cytoplasmic. A helical transmembrane segment spans residues Ala-347–Trp-367. Residues Tyr-368–Tyr-419 are Extracellular-facing. The N-linked (GlcNAc...) asparagine glycan is linked to Asn-403. The segment at residues Val-420 to Pro-440 is an intramembrane region (pore-forming). The Selectivity filter motif lies at Thr-432–Asn-437. Topologically, residues Thr-441–Lys-446 are extracellular. A helical membrane pass occupies residues Met-447–Val-467. Residues Thr-468 to Phe-988 are Cytoplasmic-facing. Ala-550–Cys-668 contributes to the a nucleoside 3',5'-cyclic phosphate binding site. Residues His-704–Gln-715 form a calmodulin-binding region. The interval Ile-721–Leu-741 is disordered. Residues Gly-723–Leu-741 are compositionally biased toward polar residues. Lys-785 is covalently cross-linked (Glycyl lysine isopeptide (Lys-Gly) (interchain with G-Cter in ubiquitin)). The tract at residues Gly-838–Asp-893 is disordered. A compositionally biased stretch (basic and acidic residues) spans Ser-871–Leu-885. The residue at position 883 (Ser-883) is a Phosphoserine. The tract at residues Thr-909–Pro-948 is CAD (involved in subunit assembly).

This sequence belongs to the potassium channel family. H (Eag) (TC 1.A.1.20) subfamily. Kv10.2/KCNH5 sub-subfamily. As to quaternary structure, homotetramer. The potassium channel is probably composed of a homo- or heterotetrameric complex of pore-forming alpha subunits that can associate with modulating beta subunits. Heteromultimer with KCNH1/EAG.

It localises to the membrane. The enzyme catalyses K(+)(in) = K(+)(out). Its function is as follows. Pore-forming (alpha) subunit of a voltage-gated delayed rectifier potassium channel that mediates outward-rectifying potassium currents which, on depolarization, reaches a steady-state level and do not inactivate. The kinetic is characterized by a slow activation time course and a small voltage dependence of the activation time constants, therefore, starts to open at more negative voltages. The activation kinetics depend on the prepulse potential and external divalent cation concentration. The time course of activation is biphasic with a fast and a slowly activating current component. With negative prepulses, the current activation is delayed and slowed down several fold, whereas more positive prepulses speed up activation, therefore the activation rate depends on holding potential. The protein is Voltage-gated delayed rectifier potassium channel KCNH5 of Mus musculus (Mouse).